We begin with the raw amino-acid sequence, 454 residues long: Phosphoglucosamine mutase (454 aa).

The Phosphoserine intermediate role is filled by serine 101. Positions 101, 243, 245, and 247 each coordinate Mg(2+). Serine 101 carries the post-translational modification Phosphoserine.

Belongs to the phosphohexose mutase family. Mg(2+) serves as cofactor. In terms of processing, activated by phosphorylation.

The catalysed reaction is alpha-D-glucosamine 1-phosphate = D-glucosamine 6-phosphate. Catalyzes the conversion of glucosamine-6-phosphate to glucosamine-1-phosphate. The sequence is that of Phosphoglucosamine mutase from Geotalea uraniireducens (strain Rf4) (Geobacter uraniireducens).